The sequence spans 278 residues: Putative peptidase Cgl1093 (278 aa).

Positions 1–32 are cleaved as a signal peptide; it reads MSSASFTTKALSVLAALTAASAPLVAASPAHA. The 204-residue stretch at 33-236 folds into the Peptidase S1 domain; sequence LANARNVTGS…HAEWIAYYTG (204 aa). A disulfide bridge links Cys-59 with Cys-75. Active-site charge relay system residues include His-74, Asp-123, and Ser-189.

Belongs to the peptidase S1 family.

The protein resides in the secreted. In Corynebacterium glutamicum (strain ATCC 13032 / DSM 20300 / JCM 1318 / BCRC 11384 / CCUG 27702 / LMG 3730 / NBRC 12168 / NCIMB 10025 / NRRL B-2784 / 534), this protein is Putative peptidase Cgl1093.